Consider the following 1055-residue polypeptide: cAMP and cAMP-inhibited cGMP 3',5'-cyclic phosphodiesterase 10A (1055 aa).

Disordered stretches follow at residues 1 to 90 (MASL…RGGG), 151 to 193 (AAAA…GRRR), and 205 to 250 (LPAR…RPQG). Gly residues-rich tracts occupy residues 79–90 (GGPGALSARGGG) and 154–168 (AGGGGDAGGGGGGGQ). Over residues 220 to 231 (PLGQAARRAGSP) the composition is skewed to low complexity. Over residues 232 to 243 (GFPGAGPGGGGQ) the composition is skewed to gly residues. A Phosphothreonine modification is found at Thr282. GAF domains lie at 367–510 (DNQL…SVAI) and 542–688 (AIDS…ALAL). 3',5'-cyclic AMP is bound by residues 562–563 (RC), 606–607 (IA), Thr640, Gln659, and His791. Positions 718 to 1035 (TSEEWQGLMQ…SQWEKVIRGE (318 aa)) constitute a PDEase domain. Catalysis depends on His791, which acts as the Proton donor. His791 contacts 3',5'-cyclic GMP. Residues His795, His829, Asp830, and Asp940 each contribute to the a divalent metal cation site. Gln992 is a 3',5'-cyclic AMP binding site. Gln992 lines the 3',5'-cyclic GMP pocket.

The protein belongs to the cyclic nucleotide phosphodiesterase family. As to quaternary structure, homodimer. It depends on a divalent metal cation as a cofactor. Phosphorylated on Thr-16. As to expression, abundant in the putamen and caudate nucleus regions of brain and testis, moderately expressed in the thyroid gland, pituitary gland, thalamus and cerebellum.

The protein resides in the cytoplasm. It localises to the cytosol. The catalysed reaction is a nucleoside 3',5'-cyclic phosphate + H2O = a nucleoside 5'-phosphate + H(+). It catalyses the reaction 3',5'-cyclic AMP + H2O = AMP + H(+). It carries out the reaction 3',5'-cyclic GMP + H2O = GMP + H(+). Its pathway is purine metabolism; 3',5'-cyclic AMP degradation; AMP from 3',5'-cyclic AMP: step 1/1. It functions in the pathway purine metabolism; 3',5'-cyclic GMP degradation; GMP from 3',5'-cyclic GMP: step 1/1. With respect to regulation, inhibited by dipyridamole and moderately by IBMX. cGMP acts as an allosteric activator. In terms of biological role, plays a role in signal transduction by regulating the intracellular concentration of cyclic nucleotides. Can hydrolyze both cAMP and cGMP, but has higher affinity for cAMP and is more efficient with cAMP as substrate. May play a critical role in regulating cAMP and cGMP levels in the striatum, a region of the brain that contributes to the control of movement and cognition. In Homo sapiens (Human), this protein is cAMP and cAMP-inhibited cGMP 3',5'-cyclic phosphodiesterase 10A (PDE10A).